A 289-amino-acid polypeptide reads, in one-letter code: MYG1 protein TC_0665 (289 aa).

It belongs to the MYG1 family.

The protein is MYG1 protein TC_0665 of Chlamydia muridarum (strain MoPn / Nigg).